Reading from the N-terminus, the 351-residue chain is Putative glycosyltransferase 45 (351 aa).

The protein belongs to the glycosyltransferase group 1 family.

This Sulfolobus islandicus filamentous virus (isolate Iceland/Hveragerdi) (SIFV) protein is Putative glycosyltransferase 45 (SIFV0045).